Here is a 735-residue protein sequence, read N- to C-terminus: Ribosomal protein S6 kinase alpha-1 (735 aa).

Serine 54 is subject to Phosphoserine. The Protein kinase 1 domain maps to 62–321; that stretch reads FELLKVLGQG…AEEIKRHIFY (260 aa). ATP contacts are provided by residues 68–76 and lysine 94; that span reads LGQGSFGKV. Catalysis depends on aspartate 187, which acts as the Proton acceptor. Phosphoserine; by PDPK1 is present on serine 221. Serine 307 is subject to Phosphoserine. The region spanning 322 to 391 is the AGC-kinase C-terminal domain; it reads STIDWNKLYR…VATGLMEDDS (70 aa). Threonine 359 carries the phosphothreonine modification. Position 363 is a phosphoserine (serine 363). 2 positions are modified to phosphoserine; by autocatalysis: serine 369 and serine 380. Residues 418-675 enclose the Protein kinase 2 domain; sequence YIVKETIGVG…AKQVLQHPWI (258 aa). Residues 424–432 and lysine 447 each bind ATP; that span reads IGVGSYSVC. The active-site Proton acceptor is aspartate 535. The residue at position 573 (threonine 573) is a Phosphothreonine. Phosphoserine is present on serine 732.

Belongs to the protein kinase superfamily. AGC Ser/Thr protein kinase family. S6 kinase subfamily. As to quaternary structure, forms a complex with either MAPK1/ERK2 or MAPK3/ERK1 in quiescent cells. Transiently dissociates following mitogenic stimulation. Interacts with ETV1/ER81 and FGFR1. Mg(2+) serves as cofactor. In terms of processing, activated by phosphorylation at Ser-221 by PDPK1. Autophosphorylated on Ser-380, as part of the activation process. May be phosphorylated at Thr-359 and Ser-363 by MAPK1/ERK2 and MAPK3/ERK1. N-terminal myristoylation results in an activated kinase in the absence of added growth factors.

Its subcellular location is the nucleus. The protein resides in the cytoplasm. The catalysed reaction is L-seryl-[protein] + ATP = O-phospho-L-seryl-[protein] + ADP + H(+). It catalyses the reaction L-threonyl-[protein] + ATP = O-phospho-L-threonyl-[protein] + ADP + H(+). With respect to regulation, upon extracellular signal or mitogen stimulation, phosphorylated at Thr-573 in the C-terminal kinase domain (CTKD) by MAPK1/ERK2 and MAPK3/ERK1. The activated CTKD then autophosphorylates Ser-380, allowing binding of PDPK1, which in turn phosphorylates Ser-221 in the N-terminal kinase domain (NTDK) leading to the full activation of the protein and subsequent phosphorylation of the substrates by the NTKD. In terms of biological role, serine/threonine-protein kinase that acts downstream of ERK (MAPK1/ERK2 and MAPK3/ERK1) signaling and mediates mitogenic and stress-induced activation of the transcription factors CREB1, ETV1/ER81 and NR4A1/NUR77, regulates translation through RPS6 and EIF4B phosphorylation, and mediates cellular proliferation, survival, and differentiation by modulating mTOR signaling and repressing pro-apoptotic function of BAD and DAPK1. In fibroblast, is required for EGF-stimulated phosphorylation of CREB1, which results in the subsequent transcriptional activation of several immediate-early genes. In response to mitogenic stimulation (EGF and PMA), phosphorylates and activates NR4A1/NUR77 and ETV1/ER81 transcription factors and the cofactor CREBBP. Upon insulin-derived signal, acts indirectly on the transcription regulation of several genes by phosphorylating GSK3B at 'Ser-9' and inhibiting its activity. Phosphorylates RPS6 in response to serum or EGF via an mTOR-independent mechanism and promotes translation initiation by facilitating assembly of the pre-initiation complex. In response to insulin, phosphorylates EIF4B, enhancing EIF4B affinity for the EIF3 complex and stimulating cap-dependent translation. Is involved in the mTOR nutrient-sensing pathway by directly phosphorylating TSC2 at 'Ser-1798', which potently inhibits TSC2 ability to suppress mTOR signaling, and mediates phosphorylation of RPTOR, which regulates mTORC1 activity and may promote rapamycin-sensitive signaling independently of the PI3K/AKT pathway. Also involved in feedback regulation of mTORC1 and mTORC2 by phosphorylating DEPTOR. Mediates cell survival by phosphorylating the pro-apoptotic proteins BAD and DAPK1 and suppressing their pro-apoptotic function. Promotes the survival of hepatic stellate cells by phosphorylating CEBPB in response to the hepatotoxin carbon tetrachloride (CCl4). Mediates induction of hepatocyte prolifration by TGFA through phosphorylation of CEBPB. Is involved in cell cycle regulation by phosphorylating the CDK inhibitor CDKN1B, which promotes CDKN1B association with 14-3-3 proteins and prevents its translocation to the nucleus and inhibition of G1 progression. Phosphorylates EPHA2 at 'Ser-897', the RPS6KA-EPHA2 signaling pathway controls cell migration. In response to mTORC1 activation, phosphorylates EIF4B at 'Ser-406' and 'Ser-422' which stimulates bicarbonate cotransporter SLC4A7 mRNA translation, increasing SLC4A7 protein abundance and function. The sequence is that of Ribosomal protein S6 kinase alpha-1 (Rps6ka1) from Rattus norvegicus (Rat).